Reading from the N-terminus, the 352-residue chain is NADP-dependent isopropanol dehydrogenase (352 aa).

Residues Cys37, His59, and Asp150 each contribute to the Zn(2+) site. NADP(+)-binding positions include 175-178, 198-200, Tyr218, 265-267, and Lys340; these read IGPV, GSR, and VNY.

Belongs to the zinc-containing alcohol dehydrogenase family. Homotetramer. Zn(2+) is required as a cofactor.

The catalysed reaction is propan-2-ol + NADP(+) = acetone + NADPH + H(+). Functionally, alcohol dehydrogenase with a preference for medium chain secondary alcohols, such as 2-butanol and isopropanol. Has very low activity with primary alcohols, such as ethanol. Under physiological conditions, the enzyme reduces aldehydes and 2-ketones to produce secondary alcohols. Is also active with acetaldehyde and propionaldehyde. The protein is NADP-dependent isopropanol dehydrogenase (adh) of Thermoanaerobacter brockii (Thermoanaerobium brockii).